Reading from the N-terminus, the 571-residue chain is MASESSQSSSPSSSQPPSSVPSPSPGNNVGDTFIGSFISLISKYEIRYEGILYHLNVQDSTLGLKNVRSCGTEGRKKDGPQIPPCDKVYDYILFRGSDIKDLQVNPSPSAQSRQEIQSEQDVNQSPHSRPAMTMSSPISGYDSGYGLGRGSQWINTPALSSKPVPVTQHSSVPLSFQPPSANAGSLTESPVSLIDSTQSNAGSSMPIPSFVQGNKFASSGVPLGMMQKPVSSSSTIPNGPQIIDYFSSPIMGLVDDSSQVVTRSPDVSSNQSYSSNPSPLGQTQLHTPPGLASVSSNLSPPSEAQLSAPNIQKIYPSAPQAIGKVVYDPQSNHPHRSIPHELPAVASNSAPVIPGPLSKSPESFFDMDPSLQSRQQMVYRGQEMFAATNPASANVPSQSFAPRNHAPLLPLPVSAHQSRIPSSSIEYTEEFDFEAMNEKFKKSELWGYLGRNNQRNQNDYGEETAIEPNAEGKPAYNKDDFFDTISCNQLDRVARSGQQHNQFPEHMRQVPEAFGNNFQRPPPLQPGQGAYLAAQTNYRGGYHNNNNNNYYSNSGYGYYSGGRGRGRNTHF.

The span at 1–17 shows a compositional bias: low complexity; sequence MASESSQSSSPSSSQPP. Disordered stretches follow at residues 1–27, 102–141, 159–187, and 258–305; these read MASE…SPGN, LQVN…ISGY, LSSK…GSLT, and SQVV…SEAQ. Residues 25–108 form the Sm domain; sequence PGNNVGDTFI…IKDLQVNPSP (84 aa). Polar residues-rich tracts occupy residues 104–138 and 167–187; these read VNPS…SSPI and TQHS…GSLT. The segment covering 264-279 has biased composition (low complexity); sequence SPDVSSNQSYSSNPSP. The span at 293–305 shows a compositional bias: polar residues; it reads SVSSNLSPPSEAQ. The 37-residue stretch at 419 to 455 folds into the DFDF domain; the sequence is RIPSSSIEYTEEFDFEAMNEKFKKSELWGYLGRNNQR. The short motif at 474–489 is the FFD box element; sequence PAYNKDDFFDTISCNQ. Positions 498-518 match the TFG box motif; sequence QQHNQFPEHMRQVPEAFGNNF.

Belongs to the LSM14 family. Homodimer. Component of the decapping complex.

It localises to the cytoplasm. Its subcellular location is the P-body. Its function is as follows. As a component of the decapping complex, involved in the degradation of mRNAs. Promotes P-body formation. Translational repressor. The chain is Decapping 5-like protein (DCP5-L) from Arabidopsis thaliana (Mouse-ear cress).